We begin with the raw amino-acid sequence, 763 residues long: Dual specificity tyrosine-phosphorylation-regulated kinase 1A (763 aa).

At serine 14 the chain carries Phosphoserine. Positions 33-56 (QMPHSHQYSDRRQPNISDQQVSAL) are disordered. Polar residues predominate over residues 46 to 56 (PNISDQQVSAL). Tyrosine 111 is modified (phosphotyrosine; by autocatalysis). The tract at residues 115 to 136 (KKRRHQQGQGDDSSHKKERKVY) is disordered. A Bipartite nuclear localization signal motif is present at residues 117-134 (RRHQQGQGDDSSHKKERK). Tyrosine 140 carries the phosphotyrosine; by autocatalysis modification. Position 145 is a phosphotyrosine (tyrosine 145). Phosphotyrosine; by autocatalysis is present on tyrosine 159. The Protein kinase domain occupies 159–479 (YEIDSLIGKG…PYYALQHSFF (321 aa)). 165–173 (IGKGSFGQV) is a binding site for ATP. Phosphotyrosine; by autocatalysis is present on tyrosine 177. Lysine 188 contacts ATP. Tyrosine 219 carries the phosphotyrosine; by autocatalysis modification. Residue 238–241 (FEML) participates in ATP binding. Catalysis depends on aspartate 287, which acts as the Proton acceptor. Serine 310 carries the phosphoserine; by autocatalysis modification. Tyrosine 319 and tyrosine 321 each carry phosphotyrosine; by autocatalysis. A Phosphothreonine; by autocatalysis modification is found at threonine 402. The tract at residues 408-442 (TKDGKREYKPPGTRKLHNILGVETGGPGGRRAGES) is disordered. Tyrosine 449 is subject to Phosphotyrosine; by autocatalysis. Residues 485–501 (EGTNTSNSVSTSPAMEQ) are compositionally biased toward polar residues. 3 disordered regions span residues 485-540 (EGTN…HSGG), 596-679 (NALH…GNQA), and 744-763 (DREE…VASS). Residues 502 to 525 (SQSSGTTSSTSSSSGGSSGTSNSG) show a composition bias toward low complexity. A phosphoserine mark is found at serine 529 and serine 538. A histidine-rich domain (HRD) region spans residues 595-625 (QNALHHHHGNSSHHHHHHHHHHHHHGQQALG). The segment covering 598–620 (LHHHHGNSSHHHHHHHHHHHHHG) has biased composition (basic residues). Residues 634–645 (NSPTNSSSTQDS) are compositionally biased toward polar residues. A compositionally biased stretch (low complexity) spans 654 to 672 (SMTSLSSSTTSSSTSSSST). Phosphoserine occurs at positions 748 and 758. Over residues 754–763 (CVQQSPVASS) the composition is skewed to polar residues.

It belongs to the protein kinase superfamily. CMGC Ser/Thr protein kinase family. MNB/DYRK subfamily. Interacts with RAD54L2/ARIP4. Interacts with CRY2. Interacts with RANBP9. Interacts with WDR68. Interacts with SIRT1. Can also autophosphorylate on serine and threonine residues (in vitro). Autophosphorylated on numerous tyrosine residues. In terms of tissue distribution, detected in brain (at protein level). Ubiquitous.

Its subcellular location is the nucleus speckle. It carries out the reaction L-seryl-[protein] + ATP = O-phospho-L-seryl-[protein] + ADP + H(+). It catalyses the reaction L-threonyl-[protein] + ATP = O-phospho-L-threonyl-[protein] + ADP + H(+). The catalysed reaction is L-tyrosyl-[protein] + ATP = O-phospho-L-tyrosyl-[protein] + ADP + H(+). The enzyme catalyses [DNA-directed RNA polymerase] + ATP = phospho-[DNA-directed RNA polymerase] + ADP + H(+). Its activity is regulated as follows. Inhibited by RANBP9. Inhibited by harmine, leucettamine B and leucettine L41. Functionally, dual-specificity kinase which possesses both serine/threonine and tyrosine kinase activities. Exhibits a substrate preference for proline at position P+1 and arginine at position P-3. Plays an important role in double-strand breaks (DSBs) repair following DNA damage. Mechanistically, phosphorylates RNF169 and increases its ability to block accumulation of TP53BP1 at the DSB sites thereby promoting homologous recombination repair (HRR). Also acts as a positive regulator of transcription by acting as a CTD kinase that mediates phosphorylation of the CTD (C-terminal domain) of the large subunit of RNA polymerase II (RNAP II) POLR2A. May play a role in a signaling pathway regulating nuclear functions of cell proliferation. Modulates alternative splicing by phosphorylating the splice factor SRSF6. Has pro-survival function and negatively regulates the apoptotic process. Promotes cell survival upon genotoxic stress through phosphorylation of SIRT1. This in turn inhibits p53/TP53 activity and apoptosis. Phosphorylates SEPTIN4, SEPTIN5 and SF3B1 at 'Thr-434'. The sequence is that of Dual specificity tyrosine-phosphorylation-regulated kinase 1A (Dyrk1a) from Rattus norvegicus (Rat).